Here is a 309-residue protein sequence, read N- to C-terminus: L-2-keto-3-deoxyarabonate dehydratase (309 aa).

K171 acts as the Schiff-base intermediate with substrate in catalysis.

The protein belongs to the DapA family. In terms of assembly, homodimer.

The enzyme catalyses 2-dehydro-3-deoxy-L-arabinonate = 2,5-dioxopentanoate + H2O. Functionally, catalyzes the dehydration of L-2-keto-3-deoxyarabonate (L-KDA) to alpha-ketoglutaric semialdehyde (alphaKGSA). Is involved in a degradation pathway of L-arabinose that allows A.brasilense to grow on L-arabinose as a sole carbon source. This chain is L-2-keto-3-deoxyarabonate dehydratase (araD), found in Azospirillum brasilense.